The sequence spans 182 residues: Protein Syd (182 aa).

It belongs to the Syd family.

The protein localises to the cell inner membrane. Its function is as follows. Interacts with the SecY protein in vivo. May bind preferentially to an uncomplexed state of SecY, thus functioning either as a chelating agent for excess SecY in the cell or as a regulatory factor that negatively controls the translocase function. The polypeptide is Protein Syd (Aliivibrio salmonicida (strain LFI1238) (Vibrio salmonicida (strain LFI1238))).